The chain runs to 57 residues: Large ribosomal subunit protein bL32 (57 aa).

Over residues 1-20 the composition is skewed to basic residues; that stretch reads MAVPKKKTSKTKRDQRKANW. The disordered stretch occupies residues 1–21; that stretch reads MAVPKKKTSKTKRDQRKANWK.

The protein belongs to the bacterial ribosomal protein bL32 family.

The protein is Large ribosomal subunit protein bL32 of Rippkaea orientalis (strain PCC 8801 / RF-1) (Cyanothece sp. (strain PCC 8801)).